The following is a 361-amino-acid chain: Chorismate synthase (361 aa).

Residues Arg-48 and Arg-54 each coordinate NADP(+). FMN-binding positions include 125–127, 238–239, Gly-278, 293–297, and Arg-319; these read RSS, NA, and KPTSS.

Belongs to the chorismate synthase family. In terms of assembly, homotetramer. Requires FMNH2 as cofactor.

It carries out the reaction 5-O-(1-carboxyvinyl)-3-phosphoshikimate = chorismate + phosphate. Its pathway is metabolic intermediate biosynthesis; chorismate biosynthesis; chorismate from D-erythrose 4-phosphate and phosphoenolpyruvate: step 7/7. Its function is as follows. Catalyzes the anti-1,4-elimination of the C-3 phosphate and the C-6 proR hydrogen from 5-enolpyruvylshikimate-3-phosphate (EPSP) to yield chorismate, which is the branch point compound that serves as the starting substrate for the three terminal pathways of aromatic amino acid biosynthesis. This reaction introduces a second double bond into the aromatic ring system. This Escherichia coli O139:H28 (strain E24377A / ETEC) protein is Chorismate synthase.